The chain runs to 70 residues: DNA-directed RNA polymerase subunit epsilon (70 aa).

Belongs to the RNA polymerase subunit epsilon family. In terms of assembly, RNAP is composed of a core of 2 alpha, a beta and a beta' subunit. The core is associated with a delta subunit, and at least one of epsilon or omega. When a sigma factor is associated with the core the holoenzyme is formed, which can initiate transcription.

It catalyses the reaction RNA(n) + a ribonucleoside 5'-triphosphate = RNA(n+1) + diphosphate. Functionally, a non-essential component of RNA polymerase (RNAP). The polypeptide is DNA-directed RNA polymerase subunit epsilon (Bacillus cytotoxicus (strain DSM 22905 / CIP 110041 / 391-98 / NVH 391-98)).